The chain runs to 241 residues: Transcription factor HEC1 (241 aa).

Residues 128–177 (ISKDPQSVAARHRRERISERIRILQRLVPGGTKMDTASMLDEAIHYVKFL) form the bHLH domain.

In terms of assembly, homodimer. Interacts with SPT. Interacts with BZIP30. As to expression, flowers, especially in gynoecium.

The protein localises to the nucleus. Required for the female reproductive tract development and fertility. The polypeptide is Transcription factor HEC1 (HEC1) (Arabidopsis thaliana (Mouse-ear cress)).